The sequence spans 77 residues: uncharacterized protein (77 aa).

The span at 1–15 (MNRTSESVEPQQNEK) shows a compositional bias: polar residues. 2 disordered regions span residues 1 to 20 (MNRT…AVHW) and 31 to 52 (TYSN…QRTF). Over residues 33–44 (SNEDDEDNEEGD) the composition is skewed to acidic residues.

This is an uncharacterized protein from Schizosaccharomyces pombe (strain 972 / ATCC 24843) (Fission yeast).